The primary structure comprises 116 residues: Ribosome-binding factor A (116 aa).

The protein belongs to the RbfA family. As to quaternary structure, monomer. Binds 30S ribosomal subunits, but not 50S ribosomal subunits or 70S ribosomes.

The protein resides in the cytoplasm. One of several proteins that assist in the late maturation steps of the functional core of the 30S ribosomal subunit. Associates with free 30S ribosomal subunits (but not with 30S subunits that are part of 70S ribosomes or polysomes). Required for efficient processing of 16S rRNA. May interact with the 5'-terminal helix region of 16S rRNA. The protein is Ribosome-binding factor A of Mycoplasma pneumoniae (strain ATCC 29342 / M129 / Subtype 1) (Mycoplasmoides pneumoniae).